The chain runs to 470 residues: Ribulose bisphosphate carboxylase large chain (470 aa).

Lys-5 bears the N6,N6,N6-trimethyllysine mark. 2 residues coordinate substrate: Asn-114 and Thr-164. The active-site Proton acceptor is Lys-166. Lys-168 serves as a coordination point for substrate. Mg(2+) contacts are provided by Lys-192, Asp-194, and Glu-195. Lys-192 is modified (N6-carboxylysine). The Proton acceptor role is filled by His-285. Positions 286, 318, and 370 each coordinate substrate.

The protein belongs to the RuBisCO large chain family. Type I subfamily. In terms of assembly, heterohexadecamer of 8 large chains and 8 small chains; disulfide-linked. The disulfide link is formed within the large subunit homodimers. Mg(2+) is required as a cofactor. The disulfide bond which can form in the large chain dimeric partners within the hexadecamer appears to be associated with oxidative stress and protein turnover.

The protein resides in the plastid. Its subcellular location is the chloroplast. The catalysed reaction is 2 (2R)-3-phosphoglycerate + 2 H(+) = D-ribulose 1,5-bisphosphate + CO2 + H2O. It catalyses the reaction D-ribulose 1,5-bisphosphate + O2 = 2-phosphoglycolate + (2R)-3-phosphoglycerate + 2 H(+). In terms of biological role, ruBisCO catalyzes two reactions: the carboxylation of D-ribulose 1,5-bisphosphate, the primary event in carbon dioxide fixation, as well as the oxidative fragmentation of the pentose substrate in the photorespiration process. Both reactions occur simultaneously and in competition at the same active site. The chain is Ribulose bisphosphate carboxylase large chain from Kigelia africana (Sausage tree).